Consider the following 195-residue polypeptide: Large ribosomal subunit protein eL15 (195 aa).

The interval 174 to 195 (GHGRLGSAKSRPSIRANGRLRR) is disordered.

Belongs to the eukaryotic ribosomal protein eL15 family.

This chain is Large ribosomal subunit protein eL15, found in Picrophilus torridus (strain ATCC 700027 / DSM 9790 / JCM 10055 / NBRC 100828 / KAW 2/3).